We begin with the raw amino-acid sequence, 626 residues long: Elongation factor 4 (626 aa).

The tr-type G domain maps to 14–195; sequence SVIRNFCIIA…QIVMDVPAPH (182 aa). GTP is bound by residues 26–31 and 142–145; these read DHGKST and NKID. The disordered stretch occupies residues 603 to 626; the sequence is LSTGEDSNDRDTKDKIRAAQKTEG. Residues 609 to 626 are compositionally biased toward basic and acidic residues; it reads SNDRDTKDKIRAAQKTEG.

This sequence belongs to the TRAFAC class translation factor GTPase superfamily. Classic translation factor GTPase family. LepA subfamily.

It is found in the cell membrane. The enzyme catalyses GTP + H2O = GDP + phosphate + H(+). In terms of biological role, required for accurate and efficient protein synthesis under certain stress conditions. May act as a fidelity factor of the translation reaction, by catalyzing a one-codon backward translocation of tRNAs on improperly translocated ribosomes. Back-translocation proceeds from a post-translocation (POST) complex to a pre-translocation (PRE) complex, thus giving elongation factor G a second chance to translocate the tRNAs correctly. Binds to ribosomes in a GTP-dependent manner. The chain is Elongation factor 4 from Bifidobacterium longum (strain DJO10A).